The chain runs to 194 residues: Small ribosomal subunit protein uS7 (194 aa).

It belongs to the universal ribosomal protein uS7 family. In terms of assembly, part of the 30S ribosomal subunit.

In terms of biological role, one of the primary rRNA binding proteins, it binds directly to 16S rRNA where it nucleates assembly of the head domain of the 30S subunit. Is located at the subunit interface close to the decoding center. The protein is Small ribosomal subunit protein uS7 of Sulfurisphaera tokodaii (strain DSM 16993 / JCM 10545 / NBRC 100140 / 7) (Sulfolobus tokodaii).